We begin with the raw amino-acid sequence, 426 residues long: Serine hydroxymethyltransferase (426 aa).

(6S)-5,6,7,8-tetrahydrofolate-binding positions include Leu-118 and 122–124 (GHL). Lys-227 is subject to N6-(pyridoxal phosphate)lysine.

The protein belongs to the SHMT family. Homodimer. It depends on pyridoxal 5'-phosphate as a cofactor.

It is found in the cytoplasm. The enzyme catalyses (6R)-5,10-methylene-5,6,7,8-tetrahydrofolate + glycine + H2O = (6S)-5,6,7,8-tetrahydrofolate + L-serine. Its pathway is one-carbon metabolism; tetrahydrofolate interconversion. It functions in the pathway amino-acid biosynthesis; glycine biosynthesis; glycine from L-serine: step 1/1. In terms of biological role, catalyzes the reversible interconversion of serine and glycine with tetrahydrofolate (THF) serving as the one-carbon carrier. This reaction serves as the major source of one-carbon groups required for the biosynthesis of purines, thymidylate, methionine, and other important biomolecules. Also exhibits THF-independent aldolase activity toward beta-hydroxyamino acids, producing glycine and aldehydes, via a retro-aldol mechanism. This chain is Serine hydroxymethyltransferase, found in Mycobacterium leprae (strain Br4923).